The following is a 436-amino-acid chain: Bystin (436 aa).

Residues 1 to 105 (MPKLKVTRGA…GSDEEDEEWP (105 aa)) are disordered. Serine 54 carries the phosphoserine modification. Residues 70 to 86 (TEHATGDRPAKPRERAT) show a composition bias toward basic and acidic residues. The segment covering 96-105 (GSDEEDEEWP) has biased composition (acidic residues). At serine 97 the chain carries Phosphoserine. Phosphothreonine is present on threonine 155. Residues serine 166 and serine 413 each carry the phosphoserine modification.

This sequence belongs to the bystin family. As to quaternary structure, binds trophinin, tastin and cytokeratins.

It localises to the cytoplasm. The protein resides in the nucleus. Its subcellular location is the nucleolus. Required for processing of 20S pre-rRNA precursor and biogenesis of 40S ribosomal subunits. The chain is Bystin from Rattus norvegicus (Rat).